Reading from the N-terminus, the 410-residue chain is Neuroserpin (410 aa).

The signal sequence occupies residues 1 to 16 (MAFLGLFSLLVLQSMA). N-linked (GlcNAc...) asparagine glycosylation is found at N157, N321, and N401. S403 carries O-linked (Xyl...) (chondroitin sulfate) serine glycosylation.

It belongs to the serpin family. As to quaternary structure, monomer. Has a tendency to form large polymers already at 41 and 45 degrees Celsius (in vitro). In terms of tissue distribution, detected in brain cortex and hippocampus pyramidal neurons (at protein level). Detected in cerebrospinal fluid (at protein level). Predominantly expressed in the brain.

It is found in the secreted. The protein localises to the cytoplasmic vesicle. The protein resides in the secretory vesicle lumen. It localises to the perikaryon. Serine protease inhibitor that inhibits plasminogen activators and plasmin but not thrombin. May be involved in the formation or reorganization of synaptic connections as well as for synaptic plasticity in the adult nervous system. May protect neurons from cell damage by tissue-type plasminogen activator. This Homo sapiens (Human) protein is Neuroserpin (SERPINI1).